The sequence spans 512 residues: Dihydroniloticin synthase CYP71CD2 (512 aa).

Residues methionine 1–phenylalanine 21 traverse the membrane as a helical segment. Cysteine 449 is a binding site for heme.

Belongs to the cytochrome P450 family. Requires heme as cofactor.

The protein resides in the membrane. It carries out the reaction tirucalla-7,24-dien-3beta-ol + 2 reduced [NADPH--hemoprotein reductase] + 2 O2 = dihydroniloticin + 2 oxidized [NADPH--hemoprotein reductase] + 2 H2O + 2 H(+). It functions in the pathway secondary metabolite biosynthesis; terpenoid biosynthesis. Functionally, monooxygenase involved in the biosynthesis of limonoids triterpene natural products such as azadirachtin, an antifeedant widely used as bioinsecticide, and possessing many medicinal applications including anti-tumoral, anti-malarial, anti-rheumatic, antibacterial, anti-inflammatory, anti-pyretic and diuretic effects. Catalyzes the conversion of tirucalladienol to dihydroniloticin. In Azadirachta indica (Neem tree), this protein is Dihydroniloticin synthase CYP71CD2.